The primary structure comprises 327 residues: rRNA 2'-O-methyltransferase fibrillarin (327 aa).

Positions 1–93 (MKPGFSPRGG…RGNQSGKNVM (93 aa)) are disordered. Residues 7 to 80 (PRGGGFGGRG…GGGRGRGGGR (74 aa)) show a composition bias toward gly residues. Asymmetric dimethylarginine occurs at positions 8, 15, 21, 24, 28, and 31. Residues K90, K108, and K115 each participate in a glycyl lysine isopeptide (Lys-Gly) (interchain with G-Cter in SUMO2) cross-link. An N6-acetyllysine modification is found at K108. Phosphoserine is present on S122. N6-acetyllysine is present on K127. Phosphoserine occurs at positions 130 and 132. Residues K137, K149, and K164 each participate in a glycyl lysine isopeptide (Lys-Gly) (interchain with G-Cter in SUMO2) cross-link. S-adenosyl-L-methionine-binding positions include 178–179 (TT) and 197–198 (EF). An N6-acetyllysine mark is found at K211 and K212. S-adenosyl-L-methionine is bound by residues 222–223 (DA) and 242–245 (DVAQ).

This sequence belongs to the methyltransferase superfamily. Fibrillarin family. In terms of assembly, component of box C/D small nucleolar ribonucleoprotein (snoRNP) particles that contain SNU13, FBL, NOP5 and NOP56, plus a guide RNA. It is associated with the U3, U8, U13, X and Y small nuclear RNAs. Component of several ribosomal and nucleolar protein complexes. Part of the small subunit (SSU) processome, composed of more than 70 proteins and the RNA chaperone small nucleolar RNA (snoRNA) U3. Interacts with PRMT5 and UTP20. Interacts with DDX5 and C1QBP. Interacts with NOL11. Interacts with PIH1D1. Interacts with RRP1B. Interacts with NOLC1. Interacts with SDE2. Interacts with NOP2 and NOP56. In terms of processing, ubiquitinated. Ubiquitination leads to proteasomal degradation. Deubiquitinated by USP36. By homology to other fibrillarins, some or all of the N-terminal domain arginines are modified to asymmetric dimethylarginine (DMA). Post-translationally, acetylated by CREBBP/CBP, preventing methylation of 'Gln-105' of histone H2A (H2AQ104me), without affecting rRNA methylation. Deacetylation by SIRT7 restores methylation of 'Gln-105' of histone H2A (H2AQ104me).

It localises to the nucleus. The protein localises to the nucleolus. The protein resides in the nucleoplasm. It catalyses the reaction L-glutaminyl-[histone H2A] + S-adenosyl-L-methionine = N(5)-methyl-L-glutaminyl-[histone H2A] + S-adenosyl-L-homocysteine + H(+). The catalysed reaction is a ribonucleotide in rRNA + S-adenosyl-L-methionine = a 2'-O-methylribonucleotide in rRNA + S-adenosyl-L-homocysteine + H(+). The enzyme catalyses a ribonucleotide in U6 snRNA + S-adenosyl-L-methionine = a 2'-O-methylribonucleotide in U6 snRNA + S-adenosyl-L-homocysteine + H(+). Functionally, S-adenosyl-L-methionine-dependent methyltransferase that has the ability to methylate both RNAs and proteins. Involved in pre-rRNA processing by catalyzing the site-specific 2'-hydroxyl methylation of ribose moieties in pre-ribosomal RNA. Site specificity is provided by a guide RNA that base pairs with the substrate. Methylation occurs at a characteristic distance from the sequence involved in base pairing with the guide RNA. Probably catalyzes 2'-O-methylation of U6 snRNAs in box C/D RNP complexes. U6 snRNA 2'-O-methylation is required for mRNA splicing fidelity. Also acts as a protein methyltransferase by mediating methylation of 'Gln-105' of histone H2A (H2AQ104me), a modification that impairs binding of the FACT complex and is specifically present at 35S ribosomal DNA locus. Part of the small subunit (SSU) processome, first precursor of the small eukaryotic ribosomal subunit. During the assembly of the SSU processome in the nucleolus, many ribosome biogenesis factors, an RNA chaperone and ribosomal proteins associate with the nascent pre-rRNA and work in concert to generate RNA folding, modifications, rearrangements and cleavage as well as targeted degradation of pre-ribosomal RNA by the RNA exosome. In Rattus norvegicus (Rat), this protein is rRNA 2'-O-methyltransferase fibrillarin (Fbl).